The chain runs to 83 residues: Small ribosomal subunit protein eS21 (83 aa).

An N-acetylmethionine modification is found at Met1. Residue Lys41 forms a Glycyl lysine isopeptide (Lys-Gly) (interchain with G-Cter in SUMO2) linkage. At Lys81 the chain carries N6-acetyllysine.

It belongs to the eukaryotic ribosomal protein eS21 family. In terms of assembly, component of the 40S small ribosomal subunit.

It is found in the cytoplasm. It localises to the cytosol. The protein localises to the rough endoplasmic reticulum. In terms of biological role, component of the small ribosomal subunit. The ribosome is a large ribonucleoprotein complex responsible for the synthesis of proteins in the cell. The protein is Small ribosomal subunit protein eS21 (RPS21) of Sus scrofa (Pig).